A 259-amino-acid chain; its full sequence is Acetylglutamate kinase (259 aa).

Residues 45–46 (GG), arginine 67, and asparagine 159 each bind substrate.

The protein belongs to the acetylglutamate kinase family. ArgB subfamily.

The protein resides in the cytoplasm. The catalysed reaction is N-acetyl-L-glutamate + ATP = N-acetyl-L-glutamyl 5-phosphate + ADP. It functions in the pathway amino-acid biosynthesis; L-arginine biosynthesis; N(2)-acetyl-L-ornithine from L-glutamate: step 2/4. In terms of biological role, catalyzes the ATP-dependent phosphorylation of N-acetyl-L-glutamate. The sequence is that of Acetylglutamate kinase from Aeromonas hydrophila subsp. hydrophila (strain ATCC 7966 / DSM 30187 / BCRC 13018 / CCUG 14551 / JCM 1027 / KCTC 2358 / NCIMB 9240 / NCTC 8049).